The primary structure comprises 314 residues: N-myc-interactor (314 aa).

The interval 1 to 24 is disordered; that stretch reads MDADKDNIKQACDERSAEMDDMRG. Ser-16 carries the post-translational modification Phosphoserine. Residues 31–65 adopt a coiled-coil conformation; it reads VHEIMSENKELDEEIKKLEAELQSDAREFQIKENV. NID domains follow at residues 104 to 193 and 202 to 293; these read GQAL…GEVE and RSAV…EVEV.

The protein belongs to the NMI family. As to quaternary structure, interacts with MYCN and MYC, as well as with other transcription factors with a Zip, HLH or a HLH-Zip motif. Interacts with all STAT proteins except STAT2. Interacts with IRF7, the interaction is direct and leads to the inhibition of IRF7-mediated type I IFN production. Interacts (via coiled-coil domain) with TRIM21 (via the SPRY domain); the interaction leads to 'Lys-63'-linked ubiquitination of NMI. Interacts with IFI35; the interaction is direct and is facilitated by TRIM21. Interacts with TLR4; the interaction is direct and leads to NF-kappa-B activation. Post-translationally, may be ubiquitinated. Expressed in macrophages.

The protein localises to the cytoplasm. The protein resides in the nucleus. It is found in the secreted. Its function is as follows. Acts as a signaling pathway regulator involved in innate immune system response. In response to interleukin 2/IL2 and interferon IFN-gamma/IFNG, interacts with signal transducer and activator of transcription/STAT which activate the transcription of downstream genes involved in a multitude of signals for development and homeostasis. Enhances the recruitment of CBP/p300 coactivators to STAT1 and STAT5, resulting in increased STAT1- and STAT5-dependent transcription. In response to interferon IFN-alpha, associates in a complex with transcriptional regulator IFI35 to regulate immune response; the complex formation prevents proteasome-mediated degradation of IFI35. In complex with IFI35, negatively regulates nuclear factor NF-kappa-B signaling by inhibiting the nuclear translocation, activation and transcription of NF-kappa-B subunit p65/RELA, resulting in the inhibition of endothelial cell proliferation, migration and re-endothelialization of injured arteries. Negatively regulates virus-triggered type I interferon/IFN production by inducing proteosome-dependent degradation of IRF7, a transcriptional regulator of type I IFN, thereby interfering with cellular antiviral responses. Beside its role as an intracellular signaling pathway regulator, also functions extracellularly as damage-associated molecular patterns (DAMPs) to promote inflammation, when actively released by macrophage to the extracellular space during cell injury or pathogen invasion. Macrophage-secreted NMI activates NF-kappa-B signaling in adjacent macrophages through Toll-like receptor 4/TLR4 binding and activation, thereby inducing NF-kappa-B translocation from the cytoplasm into the nucleus which promotes the release of pro-inflammatory cytokines. In Mus musculus (Mouse), this protein is N-myc-interactor.